A 437-amino-acid polypeptide reads, in one-letter code: Phosphomethylpyrimidine synthase (437 aa).

Residues Asn69, Met98, Tyr127, His163, 185–187 (SRG), 226–229 (DACR), and Glu265 contribute to the substrate site. Residue His269 coordinates Zn(2+). Residue Tyr292 participates in substrate binding. Zn(2+) is bound at residue His333. Cys409, Cys412, and Cys416 together coordinate [4Fe-4S] cluster.

The protein belongs to the ThiC family. It depends on [4Fe-4S] cluster as a cofactor.

It carries out the reaction 5-amino-1-(5-phospho-beta-D-ribosyl)imidazole + S-adenosyl-L-methionine = 4-amino-2-methyl-5-(phosphooxymethyl)pyrimidine + CO + 5'-deoxyadenosine + formate + L-methionine + 3 H(+). It participates in cofactor biosynthesis; thiamine diphosphate biosynthesis. Functionally, catalyzes the synthesis of the hydroxymethylpyrimidine phosphate (HMP-P) moiety of thiamine from aminoimidazole ribotide (AIR) in a radical S-adenosyl-L-methionine (SAM)-dependent reaction. The protein is Phosphomethylpyrimidine synthase of Clostridium kluyveri (strain NBRC 12016).